We begin with the raw amino-acid sequence, 460 residues long: Diguanylate cyclase DosC (460 aa).

His-98 serves as a coordination point for heme. Positions 325–458 (TPLSVLIIDV…GRNRVELWKA (134 aa)) constitute a GGDEF domain. Asp-333 contributes to the Mg(2+) binding site. Asn-341 and Asp-350 together coordinate substrate. Asp-376 is a Mg(2+) binding site. Catalysis depends on Asp-376, which acts as the Proton acceptor.

It depends on heme as a cofactor. The cofactor is Mg(2+).

The enzyme catalyses 2 GTP = 3',3'-c-di-GMP + 2 diphosphate. The protein operates within purine metabolism; 3',5'-cyclic di-GMP biosynthesis. In terms of biological role, globin-coupled heme-based oxygen sensor protein displaying diguanylate cyclase (DGC) activity in response to oxygen availability. Thus, catalyzes the synthesis of cyclic diguanylate (c-di-GMP) via the condensation of 2 GTP molecules. Cyclic-di-GMP is a second messenger which controls cell surface-associated traits in bacteria. The sequence is that of Diguanylate cyclase DosC (dosC) from Escherichia coli O157:H7.